The sequence spans 227 residues: Cytochrome c oxidase subunit 2 (227 aa).

Met1 is modified (N-formylmethionine). Topologically, residues 1-14 (MAYPMQLGFQDATS) are mitochondrial intermembrane. The helical transmembrane segment at 15–45 (PIMEELLHFHDHTLMIVFLISSLVLYIISLM) threads the bilayer. The Mitochondrial matrix segment spans residues 46 to 59 (LTTKLTHTSTMDAQ). Residues 60-87 (EVETIWTILPAIILILIALPSLRILYMM) traverse the membrane as a helical segment. Over 88–227 (DEINNPSLTV…YFEKWSASML (140 aa)) the chain is Mitochondrial intermembrane. Cu cation is bound by residues His161, Cys196, Glu198, Cys200, His204, and Met207. Residue Glu198 participates in Mg(2+) binding. Tyr218 is subject to Phosphotyrosine.

Belongs to the cytochrome c oxidase subunit 2 family. In terms of assembly, component of the cytochrome c oxidase (complex IV, CIV), a multisubunit enzyme composed of 14 subunits. The complex is composed of a catalytic core of 3 subunits MT-CO1, MT-CO2 and MT-CO3, encoded in the mitochondrial DNA, and 11 supernumerary subunits COX4I, COX5A, COX5B, COX6A, COX6B, COX6C, COX7A, COX7B, COX7C, COX8 and NDUFA4, which are encoded in the nuclear genome. The complex exists as a monomer or a dimer and forms supercomplexes (SCs) in the inner mitochondrial membrane with NADH-ubiquinone oxidoreductase (complex I, CI) and ubiquinol-cytochrome c oxidoreductase (cytochrome b-c1 complex, complex III, CIII), resulting in different assemblies (supercomplex SCI(1)III(2)IV(1) and megacomplex MCI(2)III(2)IV(2)). Found in a complex with TMEM177, COA6, COX18, COX20, SCO1 and SCO2. Interacts with TMEM177 in a COX20-dependent manner. Interacts with COX20. Interacts with COX16. It depends on Cu cation as a cofactor.

The protein resides in the mitochondrion inner membrane. It carries out the reaction 4 Fe(II)-[cytochrome c] + O2 + 8 H(+)(in) = 4 Fe(III)-[cytochrome c] + 2 H2O + 4 H(+)(out). In terms of biological role, component of the cytochrome c oxidase, the last enzyme in the mitochondrial electron transport chain which drives oxidative phosphorylation. The respiratory chain contains 3 multisubunit complexes succinate dehydrogenase (complex II, CII), ubiquinol-cytochrome c oxidoreductase (cytochrome b-c1 complex, complex III, CIII) and cytochrome c oxidase (complex IV, CIV), that cooperate to transfer electrons derived from NADH and succinate to molecular oxygen, creating an electrochemical gradient over the inner membrane that drives transmembrane transport and the ATP synthase. Cytochrome c oxidase is the component of the respiratory chain that catalyzes the reduction of oxygen to water. Electrons originating from reduced cytochrome c in the intermembrane space (IMS) are transferred via the dinuclear copper A center (CU(A)) of subunit 2 and heme A of subunit 1 to the active site in subunit 1, a binuclear center (BNC) formed by heme A3 and copper B (CU(B)). The BNC reduces molecular oxygen to 2 water molecules using 4 electrons from cytochrome c in the IMS and 4 protons from the mitochondrial matrix. The protein is Cytochrome c oxidase subunit 2 (MT-CO2) of Bos indicus (Zebu).